Here is a 98-residue protein sequence, read N- to C-terminus: uncharacterized protein (98 aa).

The segment covering 19–31 has biased composition (basic residues); it reads RRMSKRSKNKAKK. Positions 19 to 47 are disordered; that stretch reads RRMSKRSKNKAKKERVPVEDRPPTPMPTS.

The protein belongs to the lymphocryptovirus BNLF2b family.

This is an uncharacterized protein from Homo sapiens (Human).